The sequence spans 689 residues: DNA topoisomerase 1 (689 aa).

The region spanning 3 to 113 (DNLVIVESPA…KENRVVFNEI (111 aa)) is the Toprim domain. Glutamate 9 and aspartate 82 together coordinate Mg(2+). In terms of domain architecture, Topo IA-type catalytic spans 129–557 (EMNLVDAQQA…FFSSFKQDVE (429 aa)). An interaction with DNA region spans residues 163 to 168 (SAGRVQ). Residue tyrosine 298 is the O-(5'-phospho-DNA)-tyrosine intermediate of the active site. Residues 328-357 (SKRKASGKQGDQDAHEAIRPSSTMRTPDDM) are disordered. 3 consecutive C4-type zinc fingers follow at residues 577–603 (CEVC…FPDC), 617–645 (CPKC…YPEC), and 658–681 (CPKC…CSNC).

The protein belongs to the type IA topoisomerase family. Monomer. Mg(2+) serves as cofactor.

It catalyses the reaction ATP-independent breakage of single-stranded DNA, followed by passage and rejoining.. Releases the supercoiling and torsional tension of DNA, which is introduced during the DNA replication and transcription, by transiently cleaving and rejoining one strand of the DNA duplex. Introduces a single-strand break via transesterification at a target site in duplex DNA. The scissile phosphodiester is attacked by the catalytic tyrosine of the enzyme, resulting in the formation of a DNA-(5'-phosphotyrosyl)-enzyme intermediate and the expulsion of a 3'-OH DNA strand. The free DNA strand then undergoes passage around the unbroken strand, thus removing DNA supercoils. Finally, in the religation step, the DNA 3'-OH attacks the covalent intermediate to expel the active-site tyrosine and restore the DNA phosphodiester backbone. This is DNA topoisomerase 1 from Staphylococcus aureus (strain bovine RF122 / ET3-1).